The primary structure comprises 262 residues: Hydroxyethylthiazole kinase (262 aa).

A substrate-binding site is contributed by Met50. 2 residues coordinate ATP: Arg125 and Thr171. Gly198 serves as a coordination point for substrate.

This sequence belongs to the Thz kinase family. Mg(2+) serves as cofactor.

It catalyses the reaction 5-(2-hydroxyethyl)-4-methylthiazole + ATP = 4-methyl-5-(2-phosphooxyethyl)-thiazole + ADP + H(+). It participates in cofactor biosynthesis; thiamine diphosphate biosynthesis; 4-methyl-5-(2-phosphoethyl)-thiazole from 5-(2-hydroxyethyl)-4-methylthiazole: step 1/1. Catalyzes the phosphorylation of the hydroxyl group of 4-methyl-5-beta-hydroxyethylthiazole (THZ). The polypeptide is Hydroxyethylthiazole kinase (Escherichia coli O139:H28 (strain E24377A / ETEC)).